The primary structure comprises 103 residues: Glutaredoxin-C11 (103 aa).

The Glutaredoxin domain occupies 1–102 (MERIRDLSSK…QMLKDAKAIW (102 aa)). Residues C21 and C24 are joined by a disulfide bond.

It belongs to the glutaredoxin family. CC-type subfamily.

Its subcellular location is the cytoplasm. Functionally, has a glutathione-disulfide oxidoreductase activity in the presence of NADPH and glutathione reductase. Reduces low molecular weight disulfides and proteins. This is Glutaredoxin-C11 (GRXC11) from Arabidopsis thaliana (Mouse-ear cress).